Here is a 529-residue protein sequence, read N- to C-terminus: Bifunctional purine biosynthesis protein PurH (529 aa).

The 148-residue stretch at Met1 to Val148 folds into the MGS-like domain. An N6-acetyllysine modification is found at Lys287.

It belongs to the PurH family.

The catalysed reaction is (6R)-10-formyltetrahydrofolate + 5-amino-1-(5-phospho-beta-D-ribosyl)imidazole-4-carboxamide = 5-formamido-1-(5-phospho-D-ribosyl)imidazole-4-carboxamide + (6S)-5,6,7,8-tetrahydrofolate. It carries out the reaction IMP + H2O = 5-formamido-1-(5-phospho-D-ribosyl)imidazole-4-carboxamide. The protein operates within purine metabolism; IMP biosynthesis via de novo pathway; 5-formamido-1-(5-phospho-D-ribosyl)imidazole-4-carboxamide from 5-amino-1-(5-phospho-D-ribosyl)imidazole-4-carboxamide (10-formyl THF route): step 1/1. Its pathway is purine metabolism; IMP biosynthesis via de novo pathway; IMP from 5-formamido-1-(5-phospho-D-ribosyl)imidazole-4-carboxamide: step 1/1. The sequence is that of Bifunctional purine biosynthesis protein PurH from Escherichia coli O6:H1 (strain CFT073 / ATCC 700928 / UPEC).